The following is an 875-amino-acid chain: Alanine--tRNA ligase (875 aa).

Positions 564, 568, 666, and 670 each coordinate Zn(2+).

The protein belongs to the class-II aminoacyl-tRNA synthetase family. As to quaternary structure, homotetramer. Zn(2+) is required as a cofactor.

The protein resides in the cytoplasm. It carries out the reaction tRNA(Ala) + L-alanine + ATP = L-alanyl-tRNA(Ala) + AMP + diphosphate. Its function is as follows. Catalyzes the attachment of alanine to tRNA(Ala) in a two-step reaction: alanine is first activated by ATP to form Ala-AMP and then transferred to the acceptor end of tRNA(Ala). Also edits incorrectly charged Ser-tRNA(Ala) and Gly-tRNA(Ala) via its editing domain. The protein is Alanine--tRNA ligase of Serratia proteamaculans (strain 568).